The sequence spans 510 residues: GMP synthase [glutamine-hydrolyzing] (510 aa).

The Glutamine amidotransferase type-1 domain occupies 3-194; it reads QILILDFGSQ…ARVICGYKEK (192 aa). Residue Cys-80 is the Nucleophile of the active site. Active-site residues include His-168 and Glu-170. The region spanning 195-385 is the GMPS ATP-PPase domain; it reads WTPASIMTAS…LGLGSEIVDI (191 aa). 222-228 is a binding site for ATP; the sequence is SGGVDSS.

Homodimer.

The catalysed reaction is XMP + L-glutamine + ATP + H2O = GMP + L-glutamate + AMP + diphosphate + 2 H(+). It functions in the pathway purine metabolism; GMP biosynthesis; GMP from XMP (L-Gln route): step 1/1. In terms of biological role, catalyzes the synthesis of GMP from XMP. The protein is GMP synthase [glutamine-hydrolyzing] of Elusimicrobium minutum (strain Pei191).